Here is a 268-residue protein sequence, read N- to C-terminus: Type III pantothenate kinase (268 aa).

18–25 (DIGNTTTT) provides a ligand contact to ATP. Substrate-binding positions include Tyr-108 and 115-118 (GADR). Asp-117 (proton acceptor) is an active-site residue. Asp-138 is a K(+) binding site. ATP is bound at residue Thr-141. A substrate-binding site is contributed by Thr-193.

The protein belongs to the type III pantothenate kinase family. Homodimer. NH4(+) is required as a cofactor. The cofactor is K(+).

It localises to the cytoplasm. It catalyses the reaction (R)-pantothenate + ATP = (R)-4'-phosphopantothenate + ADP + H(+). Its pathway is cofactor biosynthesis; coenzyme A biosynthesis; CoA from (R)-pantothenate: step 1/5. Catalyzes the phosphorylation of pantothenate (Pan), the first step in CoA biosynthesis. The chain is Type III pantothenate kinase from Chlorobaculum parvum (strain DSM 263 / NCIMB 8327) (Chlorobium vibrioforme subsp. thiosulfatophilum).